A 644-amino-acid chain; its full sequence is Threonine--tRNA ligase (644 aa).

Positions 1–61 (MPDIQLPDGS…DQDAEVAIVT (61 aa)) constitute a TGS domain. The catalytic stretch occupies residues 242-535 (DHRRIGTELE…LIEHYEGKFP (294 aa)). Cysteine 335, histidine 386, and histidine 512 together coordinate Zn(2+).

It belongs to the class-II aminoacyl-tRNA synthetase family. As to quaternary structure, homodimer. The cofactor is Zn(2+).

The protein localises to the cytoplasm. The catalysed reaction is tRNA(Thr) + L-threonine + ATP = L-threonyl-tRNA(Thr) + AMP + diphosphate + H(+). Catalyzes the attachment of threonine to tRNA(Thr) in a two-step reaction: L-threonine is first activated by ATP to form Thr-AMP and then transferred to the acceptor end of tRNA(Thr). Also edits incorrectly charged L-seryl-tRNA(Thr). The chain is Threonine--tRNA ligase from Acidithiobacillus ferrooxidans (strain ATCC 23270 / DSM 14882 / CIP 104768 / NCIMB 8455) (Ferrobacillus ferrooxidans (strain ATCC 23270)).